The chain runs to 306 residues: Lipid A biosynthesis palmitoleoyltransferase (306 aa).

Residues 20-40 form a helical membrane-spanning segment; the sequence is WFGLGVLWLWVQLPYPVLCFL. Residues 132-137 carry the HXXXXD motif motif; that stretch reads HFMSLE.

The protein belongs to the LpxL/LpxM/LpxP family. LpxP subfamily.

It localises to the cell inner membrane. The enzyme catalyses (9Z)-hexadecenoyl-[ACP] + alpha-Kdo-(2-&gt;4)-alpha-Kdo-(2-&gt;6)-lipid IVA (E. coli) = (9Z)-hexadecenoyl-(Kdo)2-lipid IVA (E. coli) + holo-[ACP]. It participates in bacterial outer membrane biogenesis; lipopolysaccharide biosynthesis. Catalyzes the transfer of palmitoleate from palmitoleoyl-[acyl-carrier-protein] (ACP) to Kdo(2)-lipid IV(A) to form Kdo(2)-(palmitoleoyl)-lipid IV(A). Required for the biosynthesis of a distinct molecular species of lipid A, which is present only in cells grown at low temperatures. It may confer a selective advantage to cells growing at lower temperatures by making the outer membrane a more effective barrier to harmful chemicals. The protein is Lipid A biosynthesis palmitoleoyltransferase of Escherichia coli (strain K12).